The sequence spans 828 residues: Periplasmic nitrate reductase (828 aa).

The tat-type signal signal peptide spans 1 to 31 (MKLSRRHFMKANAVAAAAAVAGITIPIAVRA). The 57-residue stretch at 39–95 (IHWDKAPCRFCGVGCGVLVGTQNGRIVASQGDPEAPVNRGLNCIKGYFLPKIMYGQD) folds into the 4Fe-4S Mo/W bis-MGD-type domain. [4Fe-4S] cluster is bound by residues cysteine 46, cysteine 49, cysteine 53, and cysteine 81. Mo-bis(molybdopterin guanine dinucleotide) is bound by residues lysine 83, glutamine 150, asparagine 175, cysteine 179, 212–219 (WGSNMAEM), 243–247 (STYQH), 262–264 (QTD), methionine 372, glutamine 376, asparagine 482, 508–509 (SD), lysine 531, aspartate 558, and 718–727 (TGRVLEHWHT). Phenylalanine 794 is a substrate binding site. Mo-bis(molybdopterin guanine dinucleotide)-binding residues include asparagine 802 and lysine 819.

Belongs to the prokaryotic molybdopterin-containing oxidoreductase family. NasA/NapA/NarB subfamily. In terms of assembly, component of the periplasmic nitrate reductase NapAB complex composed of NapA and NapB. It depends on [4Fe-4S] cluster as a cofactor. Requires Mo-bis(molybdopterin guanine dinucleotide) as cofactor. Predicted to be exported by the Tat system. The position of the signal peptide cleavage has not been experimentally proven.

It localises to the periplasm. The enzyme catalyses 2 Fe(II)-[cytochrome] + nitrate + 2 H(+) = 2 Fe(III)-[cytochrome] + nitrite + H2O. Catalytic subunit of the periplasmic nitrate reductase complex NapAB. Receives electrons from NapB and catalyzes the reduction of nitrate to nitrite. This chain is Periplasmic nitrate reductase, found in Pectobacterium atrosepticum (strain SCRI 1043 / ATCC BAA-672) (Erwinia carotovora subsp. atroseptica).